We begin with the raw amino-acid sequence, 348 residues long: MDIKEALNRIVGQLDLTTEEMQAVMRQIMTGQCTDAQVGAFLMGMRMKSETIDEIVGAVQVMRELAAPVRFDTDKLVDTCGTGGDGMNIFNVSTAASFVVAAAGGKVAKHGNRAVSGKSGSADLLEAAGVFLDLTPEQVARSVDTVGVGFMFAPAHHGAMKYAAGPRRELGLRTLFNILGPMANPAGVRHQVLGVFSKALCRPMAEVLSRLGSKHVLVVHAQDGLDEISLAAPTHVAELKDGEIREYSIQPEDFGIKSQSLIGLNVEDAQGSLALIRDALGRRKSENGQKAADMIVLNAGAALYAADVATTLKQGVEMAHDALCSGIARDKLEELVSFTAVFKQENQK.

Residues glycine 81, 84-85 (GD), 91-94 (NVST), 109-117 (KHGNRAVSG), and serine 121 each bind 5-phospho-alpha-D-ribose 1-diphosphate. Residue glycine 81 participates in anthranilate binding. Serine 93 provides a ligand contact to Mg(2+). Residue asparagine 112 participates in anthranilate binding. Residue arginine 167 coordinates anthranilate. 2 residues coordinate Mg(2+): aspartate 226 and glutamate 227.

It belongs to the anthranilate phosphoribosyltransferase family. As to quaternary structure, homodimer. Mg(2+) serves as cofactor.

The catalysed reaction is N-(5-phospho-beta-D-ribosyl)anthranilate + diphosphate = 5-phospho-alpha-D-ribose 1-diphosphate + anthranilate. It functions in the pathway amino-acid biosynthesis; L-tryptophan biosynthesis; L-tryptophan from chorismate: step 2/5. In terms of biological role, catalyzes the transfer of the phosphoribosyl group of 5-phosphorylribose-1-pyrophosphate (PRPP) to anthranilate to yield N-(5'-phosphoribosyl)-anthranilate (PRA). This chain is Anthranilate phosphoribosyltransferase, found in Stutzerimonas stutzeri (strain A1501) (Pseudomonas stutzeri).